Here is a 660-residue protein sequence, read N- to C-terminus: Ankyrin repeat domain-containing protein OPG023 (660 aa).

ANK repeat units follow at residues 31-64, 101-131, 135-166, 190-222, 226-257, 268-302, 325-359, 449-478, and 482-512; these read FKNN…PLHK, NDFN…DLSV, NHRS…SVLY, YIIA…KPSS, NYCT…NTAY, RGIM…PYGI, NSDV…VVNK, RGET…DVNI, and NGYT…TLDC. The interval 578-658 is PRANC/F-box-like; it reads NTMFSLIFTE…PYTIKYKIFE (81 aa).

The protein belongs to the orthopoxvirus OPG023 family. As to quaternary structure, interacts (via N-terminus) with host RELA. Interacts (via PRANC/F-box-like domain) with the SKP1 component of the host SCF ubiquitin ligase complex.

Functionally, substrate-specific adapter of SKP1-containing E3 ubiquitin-protein ligases which mediate the ubiquitination and subsequent proteasomal degradation of host target proteins. Prevents activation and subsequent nuclear localization of NF-kappa-B in infected cells, by targeting NF-kappa-B RELA subunit to the SCF E3 ligase complex. The polypeptide is Ankyrin repeat domain-containing protein OPG023 (OPG023) (Cynomys gunnisoni (Gunnison's prairie dog)).